We begin with the raw amino-acid sequence, 442 residues long: Serum response factor-binding protein 1 (442 aa).

2 coiled-coil regions span residues 55–77 (EDALLKNQRRAQRLLQEIHAMKE) and 118–140 (LLKRKVDALKAAIQAFKDARQNA). Disordered regions lie at residues 137–336 (RQNA…LETH) and 358–442 (FHSL…TFDD). 2 stretches are compositionally biased toward basic and acidic residues: residues 149-159 (ASKESQCEDIP) and 167-188 (ESQHPERTVVGEQKGKDKDPTT). Residue K202 forms a Glycyl lysine isopeptide (Lys-Gly) (interchain with G-Cter in SUMO2) linkage. S215 carries the post-translational modification Phosphoserine. Residues 237–247 (GNHSQGKASTR) are compositionally biased toward polar residues. The segment covering 266–278 (VSEEEKEYFDDST) has biased composition (acidic residues). S277, S292, and S294 each carry phosphoserine. A Glycyl lysine isopeptide (Lys-Gly) (interchain with G-Cter in SUMO2) cross-link involves residue K329. S362 carries the post-translational modification Phosphoserine. The span at 367-382 (SRRDPREQAPKNKAPD) shows a compositional bias: basic and acidic residues.

Interacts with SRF. Forms complexes with SRF and SRF cofactors ARID2, MYOCD and NKX2-5. Interacts with the N-terminus of SLC2A4.

The protein localises to the cytoplasm. It is found in the perinuclear region. Functionally, may be involved in regulating transcriptional activation of cardiac genes during the aging process. May play a role in biosynthesis and/or processing of SLC2A4 in adipose cells. This Rattus norvegicus (Rat) protein is Serum response factor-binding protein 1.